The following is a 30-amino-acid chain: Thermophilic aminopeptidase 1 alpha chain (30 aa).

It belongs to the peptidase M42 family. As to quaternary structure, 12 chains of two different but homologous types, alpha and beta, which can combine in various ratios. A divalent metal cation is required as a cofactor.

Functionally, metalloenzyme of broad specificity, releasing all N-terminal amino acids. This is Thermophilic aminopeptidase 1 alpha chain from Geobacillus stearothermophilus (Bacillus stearothermophilus).